Reading from the N-terminus, the 218-residue chain is Ribose-5-phosphate isomerase A (218 aa).

Residues 28–31, 81–84, and 94–97 each bind substrate; these read TGST, DGAD, and KGGG. Residue Glu103 is the Proton acceptor of the active site. Lys121 is a binding site for substrate.

The protein belongs to the ribose 5-phosphate isomerase family. Homodimer.

The catalysed reaction is aldehydo-D-ribose 5-phosphate = D-ribulose 5-phosphate. It participates in carbohydrate degradation; pentose phosphate pathway; D-ribose 5-phosphate from D-ribulose 5-phosphate (non-oxidative stage): step 1/1. Catalyzes the reversible conversion of ribose-5-phosphate to ribulose 5-phosphate. The protein is Ribose-5-phosphate isomerase A of Methylococcus capsulatus (strain ATCC 33009 / NCIMB 11132 / Bath).